The chain runs to 353 residues: Ubiquinol oxidase 1, mitochondrial (353 aa).

Residues 1 to 69 constitute a mitochondrion transit peptide; that stretch reads MMTRGATRMT…RHFPVMGSRS (69 aa). Positions 77 to 99 are disordered; that stretch reads DKQHDKKAENGSAAATGGGDGGD. Residues 178 to 198 traverse the membrane as a helical segment; the sequence is AMMLETVAAVPGMVGGMLLHC. Positions 182, 221, and 224 each coordinate Fe cation. The helical transmembrane segment at 240 to 260 threads the bilayer; the sequence is ALVFAVQGVFFNAYFVTYLLS. Residues Glu272, Glu323, and His326 each contribute to the Fe cation site.

Belongs to the alternative oxidase family. Homodimer; disulfide-linked. Requires Fe cation as cofactor.

The protein localises to the mitochondrion inner membrane. It carries out the reaction 2 a ubiquinol + O2 = 2 a ubiquinone + 2 H2O. Stimulated by reduction of the disulfide bond and the presence of pyruvate. Its function is as follows. Catalyzes the cyanide-resistant oxidation of ubiquinol and the reduction of molecular oxygen to water, but does not translocate protons and consequently is not linked to oxidative phosphorylation. May increase respiration when the cytochrome respiratory pathway is restricted, or in response to low temperatures. The sequence is that of Ubiquinol oxidase 1, mitochondrial (AOX1) from Nicotiana tabacum (Common tobacco).